A 175-amino-acid chain; its full sequence is Peptide methionine sulfoxide reductase MsrA (175 aa).

The active site involves Cys-10.

Belongs to the MsrA Met sulfoxide reductase family.

It catalyses the reaction L-methionyl-[protein] + [thioredoxin]-disulfide + H2O = L-methionyl-(S)-S-oxide-[protein] + [thioredoxin]-dithiol. It carries out the reaction [thioredoxin]-disulfide + L-methionine + H2O = L-methionine (S)-S-oxide + [thioredoxin]-dithiol. Functionally, has an important function as a repair enzyme for proteins that have been inactivated by oxidation. Catalyzes the reversible oxidation-reduction of methionine sulfoxide in proteins to methionine. The polypeptide is Peptide methionine sulfoxide reductase MsrA (Clavibacter sepedonicus (Clavibacter michiganensis subsp. sepedonicus)).